We begin with the raw amino-acid sequence, 521 residues long: Myocyte-specific enhancer factor 2D (521 aa).

The region spanning 3–57 is the MADS-box domain; the sequence is RKKIQIQRITDERNRQVTFTKRKFGLMKKAYELSVLCDCEIALIIFNHSNKLFQY. The segment at residues 58 to 86 is a DNA-binding region (mef2-type); the sequence is ASTDMDKVLLKYTEYNEPHESRTNADIIE. Phosphoserine occurs at positions 98, 106, and 110. Phosphoserine; by PKA is present on Ser121. A disordered region spans residues 174 to 207; the sequence is TDPRLLSPQQPALQRNSVSPGLPQRPASAGAMLG. Position 180 is a phosphoserine; by MAPK7 (Ser180). A compositionally biased stretch (polar residues) spans 180-192; the sequence is SPQQPALQRNSVS. Phosphoserine; by PKA is present on Ser190. Position 231 is a phosphoserine (Ser231). Residues 244 to 266 form a disordered region; the sequence is NKVIPAKSPPPPTHSTQLGAPSR. At Lys245 the chain carries N6-acetyllysine. The residue at position 251 (Ser251) is a Phosphoserine. Residues 286–292 are beta domain; sequence TEDHLDL. Disordered regions lie at residues 357-407 and 437-521; these read SLGN…QSHL and SIKS…WTLK. The segment covering 373 to 400 has biased composition (pro residues); the sequence is PQQPQPPQQQPPQPQQPQPQQPQQPQQP. Position 439 is an N6-acetyllysine; alternate (Lys439). Lys439 participates in a covalent cross-link: Glycyl lysine isopeptide (Lys-Gly) (interchain with G-Cter in SUMO); alternate. A Phosphoserine modification is found at Ser444.

The protein belongs to the MEF2 family. As to quaternary structure, interacts with MYOG. Forms a complex with class II HDACs in undifferentiating cells. On myogenic differentiation, HDACs are released into the cytoplasm allowing MEF2s to interact with other proteins for activation. Interacts with HDAC4 (in undifferentiating cells); the interaction translocates MEF2D to nuclear dots. Forms a heterodimer with MEF2A. Interacts with MAPK7; the interaction phosphorylates but does not activate MEF2D. Interacts with CCAR2 and HDAC3. Phosphorylated on Ser-444 by CDK5 is required for Lys-439 sumoylation and inhibits transcriptional activity. In neurons, enhanced CDK5 activity induced by neurotoxins promotes caspase 3-mediated cleavage leading to neuron apoptosis. Phosphorylation on Ser-180 can be enhanced by EGF. Phosphorylated and activated by CaMK4. In terms of processing, acetylated on Lys-439 by CREBBP. Acetylated by EP300. Deacetylated by SIRT1 and HDAC3. Post-translationally, sumoylated on Lys-439 with SUMO2 but not SUMO1; which inhibits transcriptional activity and myogenic activity. Desumoylated by SENP3. Proteolytically cleaved in cerebellar granule neurons on several sites by caspase 7 following neurotoxicity. Preferentially cleaves the CDK5-mediated hyperphosphorylated form which leads to neuron apoptosis and transcriptional inactivation.

It localises to the nucleus. Functionally, transcriptional activator which binds specifically to the MEF2 element, 5'-YTA[AT](4)TAR-3', found in numerous muscle-specific, growth factor- and stress-induced genes. Mediates cellular functions not only in skeletal and cardiac muscle development, but also in neuronal differentiation and survival. Plays diverse roles in the control of cell growth, survival and apoptosis via p38 MAPK signaling in muscle-specific and/or growth factor-related transcription. Plays a critical role in the regulation of neuronal apoptosis. The protein is Myocyte-specific enhancer factor 2D (MEF2D) of Homo sapiens (Human).